The primary structure comprises 138 residues: Large ribosomal subunit protein uL16 (138 aa).

The protein belongs to the universal ribosomal protein uL16 family. As to quaternary structure, part of the 50S ribosomal subunit.

Functionally, binds 23S rRNA and is also seen to make contacts with the A and possibly P site tRNAs. This chain is Large ribosomal subunit protein uL16, found in Mycoplasma genitalium (strain ATCC 33530 / DSM 19775 / NCTC 10195 / G37) (Mycoplasmoides genitalium).